The chain runs to 84 residues: Small ribosomal subunit protein eS27 (84 aa).

The C4-type zinc-finger motif lies at 38-60 (CPKCGATTTTFSHAHRQILCQKC).

The protein belongs to the eukaryotic ribosomal protein eS27 family. As to quaternary structure, component of the small ribosomal subunit. It depends on Zn(2+) as a cofactor.

The protein resides in the cytoplasm. Its function is as follows. Component of the small ribosomal subunit. The ribosome is a large ribonucleoprotein complex responsible for the synthesis of proteins in the cell. Required for proper rRNA processing and maturation of 18S rRNAs. In Entamoeba histolytica (strain ATCC 30459 / HM-1:IMSS / ABRM), this protein is Small ribosomal subunit protein eS27 (RPS27).